We begin with the raw amino-acid sequence, 888 residues long: Glutamate receptor 3 (888 aa).

Residues 1-22 form the signal peptide; that stretch reads MGQSVLRAVFFLVLGLLGHSHG. Residues 23 to 546 lie on the Extracellular side of the membrane; sequence GFPNTISIGG…GVFSFLDPLA (524 aa). N-linked (GlcNAc...) asparagine glycosylation is found at N57, N260, N374, N409, and N416. C85 and C334 are disulfide-bonded. 3 residues coordinate L-glutamate: P502, T504, and R509. Residues 547–567 traverse the membrane as a helical segment; it reads YEIWMCIVFAYIGVSVVLFLV. Residues 568-596 are Cytoplasmic-facing; the sequence is SRFSPYEWHLEDNNEEPRDPQSPPDPPNE. Positions 597–612 form an intramembrane region, helical; Pore-forming; that stretch reads FGIFNSLWFSLGAFMQ. An intramembrane segment occupies 613–615; sequence QGC. The S-palmitoyl cysteine moiety is linked to residue C615. The Cytoplasmic segment spans residues 616-621; that stretch reads DISPRS. Residues 622-642 form a helical membrane-spanning segment; the sequence is LSGRIVGGVWWFFTLIIISSY. The Extracellular segment spans residues 643-817; the sequence is TANLAAFLTV…DKTSALSLSN (175 aa). The L-glutamate site is built by S680, T681, and E731. Cysteines 744 and 799 form a disulfide. The chain crosses the membrane as a helical span at residues 818–838; it reads VAGVFYILVGGLGLAMMVALI. Topologically, residues 839–888 are cytoplasmic; it reads EFCYKSRAESKRMKLTKNTQNFKPAPATNTQNYATYREGYNVYGTESVKI. C841 carries the S-palmitoyl cysteine lipid modification. Residues Y871 and Y881 each carry the phosphotyrosine modification.

It belongs to the glutamate-gated ion channel (TC 1.A.10.1) family. GRIA3 subfamily. As to quaternary structure, homotetramer or heterotetramer of pore-forming glutamate receptor subunits. Tetramers may be formed by the dimerization of dimers. Interacts with PICK1, GRIP1 and GRIP2. Found in a complex with GRIA1, GRIA2, GRIA4, CNIH2, CNIH3, CACNG2, CACNG3, CACNG4, CACNG5, CACNG7 and CACNG8. Interacts with CACNG5. Found in a complex with GRIA1, GRIA2, GRIA4, DLG4, CACNG8 and CNIH2.

It is found in the cell membrane. The protein localises to the postsynaptic cell membrane. The protein resides in the postsynaptic density membrane. The catalysed reaction is Ca(2+)(in) = Ca(2+)(out). In terms of biological role, ionotropic glutamate receptor that functions as a ligand-gated cation channel, gated by L-glutamate and glutamatergic agonists such as alpha-amino-3-hydroxy-5-methyl-4-isoxazolepropionic acid (AMPA), quisqualic acid, and kainic acid. L-glutamate acts as an excitatory neurotransmitter at many synapses in the central nervous system and plays an important role in fast excitatory synaptic transmission by inducing long-term potentiation. Binding of the excitatory neurotransmitter L-glutamate induces a conformation change, leading to the opening of the cation channel, and thereby converts the chemical signal to an electrical impulse upon entry of calcium. The receptor then desensitizes rapidly and enters a transient inactive state, characterized by the presence of bound agonist. In the presence of CACNG8, shows resensitization which is characterized by a delayed accumulation of current flux upon continued application of glutamate. In Mus musculus (Mouse), this protein is Glutamate receptor 3.